A 321-amino-acid chain; its full sequence is Capsid protein (321 aa).

The interval 1–43 (MSGEQTEQISKDKAVAAEQARKEQIAEGKKAAESPEVERRKKN) is disordered. Residues 9–39 (ISKDKAVAAEQARKEQIAEGKKAAESPEVER) are compositionally biased toward basic and acidic residues.

It belongs to the potexviruses coat protein family.

The protein resides in the virion. Its function is as follows. Required for genome encapsidation. Forms ribonucleoprotein complexes along with TGB1 helicase and viral RNA. The protein is Capsid protein of Poplar mosaic virus (isolate ATCC Pv275) (PMV).